The sequence spans 170 residues: Peptide deformylase 1 (170 aa).

C91 and H133 together coordinate Fe cation. E134 is a catalytic residue. Position 137 (H137) interacts with Fe cation.

Belongs to the polypeptide deformylase family. It depends on Fe(2+) as a cofactor.

The catalysed reaction is N-terminal N-formyl-L-methionyl-[peptide] + H2O = N-terminal L-methionyl-[peptide] + formate. Functionally, removes the formyl group from the N-terminal Met of newly synthesized proteins. Requires at least a dipeptide for an efficient rate of reaction. N-terminal L-methionine is a prerequisite for activity but the enzyme has broad specificity at other positions. The polypeptide is Peptide deformylase 1 (Vibrio vulnificus (strain CMCP6)).